Here is a 38-residue protein sequence, read N- to C-terminus: uncharacterized protein (38 aa).

The chain crosses the membrane as a helical span at residues 10–32 (FSLLWYFLVGGGKGEVCWRFLGI).

The protein resides in the membrane. This is an uncharacterized protein from Saccharomyces cerevisiae (strain ATCC 204508 / S288c) (Baker's yeast).